Here is a 378-residue protein sequence, read N- to C-terminus: 7-methylxanthine methyltransferase 1 (378 aa).

Positions 18, 61, 66, 100, 101, 139, 140, and 156 each coordinate S-adenosyl-L-homocysteine. Residues Tyr157, His160, and Trp161 each contribute to the theobromine site. Residues Asn178, Asp260, Phe262, and Asn263 each coordinate Mg(2+). Tyr362 lines the theobromine pocket.

It belongs to the methyltransferase superfamily. Type-7 methyltransferase family. Mg(2+) is required as a cofactor. In terms of tissue distribution, mainly expressed, at low levels, in leaves and fruits (grains). Also present, at lower levels, in roots, stamens and pistils.

It localises to the cytoplasm. It carries out the reaction 7-methylxanthine + S-adenosyl-L-methionine = theobromine + S-adenosyl-L-homocysteine + H(+). It functions in the pathway alkaloid biosynthesis. Involved in the biosynthesis of caffeine. Catalyzes the conversion of 7-methylxanthine (7mX) to theobromine and of paraxanthine to caffeine. The sequence is that of 7-methylxanthine methyltransferase 1 from Coffea canephora (Robusta coffee).